The chain runs to 623 residues: Putative disease resistance protein At5g47280 (623 aa).

NB-ARC domains follow at residues 2 to 51 (LFNL…VSQS) and 119 to 249 (VDPR…NMLV). Residue 16 to 23 (GMIGSGKT) coordinates ATP. 4 LRR repeats span residues 488–511 (SLNS…SKLQ), 512–534 (ALQL…ICEL), 536–558 (RLVY…IGNV), and 560–581 (TLEK…AVSL).

Belongs to the disease resistance NB-LRR family.

Functionally, potential disease resistance protein. The polypeptide is Putative disease resistance protein At5g47280 (Arabidopsis thaliana (Mouse-ear cress)).